We begin with the raw amino-acid sequence, 175 residues long: Large ribosomal subunit protein uL10 (175 aa).

This sequence belongs to the universal ribosomal protein uL10 family. As to quaternary structure, part of the ribosomal stalk of the 50S ribosomal subunit. The N-terminus interacts with L11 and the large rRNA to form the base of the stalk. The C-terminus forms an elongated spine to which L12 dimers bind in a sequential fashion forming a multimeric L10(L12)X complex.

Forms part of the ribosomal stalk, playing a central role in the interaction of the ribosome with GTP-bound translation factors. The chain is Large ribosomal subunit protein uL10 from Prochlorococcus marinus (strain NATL1A).